Here is a 118-residue protein sequence, read N- to C-terminus: Inner membrane protein YhaI (118 aa).

At 1-25 (MQWYLSVLKNYVGFSGRARRKEYWM) the chain is on the periplasmic side. A helical transmembrane segment spans residues 26-46 (FTLINAIVGAIINVIQLILGL). A topological domain (cytoplasmic) is located at residue Glu-47. A helical membrane pass occupies residues 48–68 (LPYLSMLYLLATFLPVLALAI). At 69–77 (RRLHDTDRS) the chain is on the periplasmic side. A helical transmembrane segment spans residues 78–98 (GAWALLFFVPFIGWLVLLVFF). The Cytoplasmic segment spans residues 99–118 (CTEGTSGSNRYGNDPKFGSN).

This sequence to E.coli YhaH.

The protein localises to the cell inner membrane. The sequence is that of Inner membrane protein YhaI (yhaI) from Escherichia coli O157:H7.